Here is a 133-residue protein sequence, read N- to C-terminus: Small ribosomal subunit protein uS11 (133 aa).

It belongs to the universal ribosomal protein uS11 family. As to quaternary structure, part of the 30S ribosomal subunit.

Functionally, located on the platform of the 30S subunit. The polypeptide is Small ribosomal subunit protein uS11 (Pyrobaculum aerophilum (strain ATCC 51768 / DSM 7523 / JCM 9630 / CIP 104966 / NBRC 100827 / IM2)).